Here is a 506-residue protein sequence, read N- to C-terminus: Photosystem II CP47 reaction center protein (506 aa).

The next 6 helical transmembrane spans lie at 21–36 (SVHIMHTALVAGWAGS), 101–115 (ILFSGLCFLAAIWHW), 140–156 (GIHLFLSGLGCFGFGAF), 203–218 (IAAGTLGILAGLFHLS), 237–252 (VLSSSIAAVFFAAFVV), and 457–472 (SFALLFFFGHIWHGAR).

It belongs to the PsbB/PsbC family. PsbB subfamily. PSII is composed of 1 copy each of membrane proteins PsbA, PsbB, PsbC, PsbD, PsbE, PsbF, PsbH, PsbI, PsbJ, PsbK, PsbL, PsbM, PsbT, PsbX, PsbY, PsbZ, Psb30/Ycf12, at least 3 peripheral proteins of the oxygen-evolving complex and a large number of cofactors. It forms dimeric complexes. The cofactor is Binds multiple chlorophylls. PSII binds additional chlorophylls, carotenoids and specific lipids..

The protein resides in the plastid. It is found in the chloroplast thylakoid membrane. In terms of biological role, one of the components of the core complex of photosystem II (PSII). It binds chlorophyll and helps catalyze the primary light-induced photochemical processes of PSII. PSII is a light-driven water:plastoquinone oxidoreductase, using light energy to abstract electrons from H(2)O, generating O(2) and a proton gradient subsequently used for ATP formation. This chain is Photosystem II CP47 reaction center protein, found in Cucumis sativus (Cucumber).